The sequence spans 495 residues: Myocyte-specific enhancer factor 2A (495 aa).

Residues 3–57 (RKKIQITRIMDERNRQVTFTKRKFGLMKKAYELSVLCDCEIALIIFNSSNKLFQY) form the MADS-box domain. A DNA-binding region (mef2-type) is located at residues 58 to 86 (ASTDMDKVLLKYTEYNEPHESRTNSDIVE). Serine 59 carries the post-translational modification Phosphoserine; by CK2. Phosphoserine is present on serine 98. Residues 175–225 (AESSMLSPPPATLHRNVSPGAPQRPPSTGSAGGMLSTTDLTVPNGAGNGPV) form a disordered region. Serine 235 is subject to Phosphoserine. Residues 242-271 (TGANSVGKVMPTKSPPPPGGGSVGMNSRKP) are disordered. Position 249 is an N6-acetyllysine (lysine 249). Serine 255 is subject to Phosphoserine. The tract at residues 266–283 (MNSRKPDLRVVIPPSSKG) is required for interaction with MAPKs. 2 positions are modified to phosphothreonine; by MAPK7 and MAPK14: threonine 304 and threonine 311. The residue at position 347 (serine 347) is a Phosphoserine; by MAPK7. Polar residues predominate over residues 382-394 (SNLSINTNQNINI). The tract at residues 382 to 495 (SNLSINTNQN…KRMRMDTWVT (114 aa)) is disordered. An N6-acetyllysine; alternate modification is found at lysine 395. Residue lysine 395 forms a Glycyl lysine isopeptide (Lys-Gly) (interchain with G-Cter in SUMO); alternate linkage. Serine 400 carries the phosphoserine; by CDK5 modification. The residue at position 407 (threonine 407) is a Phosphothreonine. Positions 421-433 (QQPPPQPPQPQPQ) are enriched in pro residues. Serine 441 is modified (phosphoserine). A compositionally biased stretch (low complexity) spans 441 to 454 (SPVDSLSSSSSSYD). Composition is skewed to basic and acidic residues over residues 455 to 465 (GSDREDPRGDF) and 476 to 495 (NAEDRESPSVKRMRMDTWVT).

Binds DNA as a homo- or heterodimer. Dimerizes with MEF2D. Interacts with HDAC7. Interacts with PIAS1; the interaction enhances sumoylation. Interacts with HDAC4, HDAC9 and SLC2A4RG. Interacts (via the N-terminal) with MAPK7; the interaction results in the phosphorylation and transcriptional activity of MEF2A. Constitutive phosphorylation on Ser-400 promotes Lys-395 sumoylation thus preventing acetylation at this site. Dephosphorylation on Ser-400 by PPP3CA upon neuron depolarization promotes a switch from sumoylation to acetylation on residue Lys-395 leading to inhibition of dendrite claw differentiation. Phosphorylation on Thr-304 and Thr-311 are the main sites involved in p38 MAPK signaling and activate transcription. Phosphorylated on these sites by MAPK14/p38alpha and MAPK11/p38beta, but not by MAPK13/p38delta nor by MAPK12/p38gamma. Phosphorylation on Ser-400 by CDK5 induced by neurotoxicity inhibits MEF2A transcriptional activation leading to apoptosis of cortical neurons. Phosphorylation on Thr-304, Thr-311 and Ser-347 can be induced by EGF. In terms of processing, sumoylation on Lys-395 is enhanced by PIAS1 and represses transcriptional activity. Phosphorylation on Ser-400 is required for sumoylation. Has no effect on nuclear location nor on DNA binding. Sumoylated with SUMO1 and, to a lesser extent with SUMO2 and SUMO3. PIASx facilitates sumoylation in postsynaptic dendrites in the cerebellar cortex and promotes their morphogenesis. Post-translationally, acetylation on Lys-395 activates transcriptional activity. Acetylated by p300 on several sites in diffentiating myocytes. Acetylation on Lys-4 increases DNA binding and transactivation. Hyperacetylation by p300 leads to enhanced cardiac myocyte growth and heart failure. Proteolytically cleaved in cerebellar granule neurons on several sites by caspase 3 and caspase 7 following neurotoxicity. Preferentially cleaves the CDK5-mediated hyperphosphorylated form which leads to neuron apoptosis and transcriptional inactivation.

It localises to the nucleus. Transcriptional activator which binds specifically to the MEF2 element, 5'-YTA[AT](4)TAR-3', found in numerous muscle-specific genes. Also involved in the activation of numerous growth factor- and stress-induced genes. Mediates cellular functions not only in skeletal and cardiac muscle development, but also in neuronal differentiation and survival. Plays diverse roles in the control of cell growth, survival and apoptosis via p38 MAPK signaling in muscle-specific and/or growth factor-related transcription. In cerebellar granule neurons, phosphorylated and sumoylated MEF2A represses transcription of NUR77 promoting synaptic differentiation. Associates with chromatin to the ZNF16 promoter. This is Myocyte-specific enhancer factor 2A (Mef2a) from Rattus norvegicus (Rat).